The primary structure comprises 419 residues: Serine hydroxymethyltransferase (419 aa).

(6S)-5,6,7,8-tetrahydrofolate contacts are provided by residues Leu-118 and 122–124 (GHL). An N6-(pyridoxal phosphate)lysine modification is found at Lys-226. Glu-242 provides a ligand contact to (6S)-5,6,7,8-tetrahydrofolate.

The protein belongs to the SHMT family. Homodimer. Pyridoxal 5'-phosphate is required as a cofactor.

Its subcellular location is the cytoplasm. The enzyme catalyses (6R)-5,10-methylene-5,6,7,8-tetrahydrofolate + glycine + H2O = (6S)-5,6,7,8-tetrahydrofolate + L-serine. The protein operates within one-carbon metabolism; tetrahydrofolate interconversion. Its pathway is amino-acid biosynthesis; glycine biosynthesis; glycine from L-serine: step 1/1. Its function is as follows. Catalyzes the reversible interconversion of serine and glycine with tetrahydrofolate (THF) serving as the one-carbon carrier. This reaction serves as the major source of one-carbon groups required for the biosynthesis of purines, thymidylate, methionine, and other important biomolecules. Also exhibits THF-independent aldolase activity toward beta-hydroxyamino acids, producing glycine and aldehydes, via a retro-aldol mechanism. This is Serine hydroxymethyltransferase from Metamycoplasma arthritidis (strain 158L3-1) (Mycoplasma arthritidis).